A 318-amino-acid chain; its full sequence is Ribose-phosphate pyrophosphokinase 2 (318 aa).

An ATP-binding site is contributed by 96-101; that stretch reads RQDKKD. 4 residues coordinate Mg(2+): Asp-128, His-130, Asp-139, and Asp-143. His-130 is an ATP binding site. The interval 212 to 227 is binding of phosphoribosylpyrophosphate; the sequence is KDRVAILVDDMADTCG.

This sequence belongs to the ribose-phosphate pyrophosphokinase family. Homodimer. The active form is probably a hexamer composed of 3 homodimers. Mg(2+) serves as cofactor.

It carries out the reaction D-ribose 5-phosphate + ATP = 5-phospho-alpha-D-ribose 1-diphosphate + AMP + H(+). It participates in metabolic intermediate biosynthesis; 5-phospho-alpha-D-ribose 1-diphosphate biosynthesis; 5-phospho-alpha-D-ribose 1-diphosphate from D-ribose 5-phosphate (route I): step 1/1. Activated by magnesium and inorganic phosphate. In terms of biological role, catalyzes the synthesis of phosphoribosylpyrophosphate (PRPP) that is essential for nucleotide synthesis. The protein is Ribose-phosphate pyrophosphokinase 2 (Prps2) of Rattus norvegicus (Rat).